Here is a 291-residue protein sequence, read N- to C-terminus: Tyrosine isonitrile desaturase (291 aa).

Fe cation is bound by residues His110, Asp112, and His259.

It belongs to the TfdA dioxygenase family. In terms of assembly, homotrimer in solution. The cofactor is Fe(2+).

It catalyses the reaction (2S)-3-(4-hydroxyphenyl)-2-isocyanopropanoate + 2-oxoglutarate + O2 = (2E)-3-(4-hydroxyphenyl)-2-isocyanoprop-2-enoate + succinate + CO2 + H2O. Functionally, involved in the biosynthesis of paerucumarin, a cyclized isocyano derivative of tyrosine. Catalyzes the 2-oxoglutarate-dependent oxidation of tyrosine isonitrile. In Pseudomonas aeruginosa (strain ATCC 15692 / DSM 22644 / CIP 104116 / JCM 14847 / LMG 12228 / 1C / PRS 101 / PAO1), this protein is Tyrosine isonitrile desaturase.